The sequence spans 164 residues: Transcription antitermination protein NusB (164 aa).

This sequence belongs to the NusB family.

In terms of biological role, involved in transcription antitermination. Required for transcription of ribosomal RNA (rRNA) genes. Binds specifically to the boxA antiterminator sequence of the ribosomal RNA (rrn) operons. The chain is Transcription antitermination protein NusB from Chlamydia muridarum (strain MoPn / Nigg).